The sequence spans 251 residues: Proteasome subunit alpha type-4-like (251 aa).

Belongs to the peptidase T1A family. In terms of assembly, the 26S proteasome consists of a 20S proteasome core and two 19S regulatory subunits. The 20S proteasome core is composed of 28 subunits that are arranged in four stacked rings, resulting in a barrel-shaped structure. The two end rings are each formed by seven alpha subunits, and the two central rings are each formed by seven beta subunits. The catalytic chamber with the active sites is on the inside of the barrel. Testis, prominent after meiosis II. After meiosis, predominantly localized to the haploid spermatid nuclei of the 64-cell cysts, remaining during the elongation and condensation of the spermatid nuclei. In mature, motile sperm, expression is seen exclusively in the sperm head.

It localises to the nucleus. In terms of biological role, the proteasome is a multicatalytic proteinase complex which is characterized by its ability to cleave peptides with Arg, Phe, Tyr, Leu, and Glu adjacent to the leaving group at neutral or slightly basic pH. The proteasome has an ATP-dependent proteolytic activity. This Drosophila melanogaster (Fruit fly) protein is Proteasome subunit alpha type-4-like (Prosalpha3T).